The following is a 64-amino-acid chain: Large ribosomal subunit protein bL28 (64 aa).

Residues 1-27 (MAKRDQLTGKGPLSGNTRSHAMNHSKR) are disordered.

The protein belongs to the bacterial ribosomal protein bL28 family.

This Ureaplasma parvum serovar 3 (strain ATCC 27815 / 27 / NCTC 11736) protein is Large ribosomal subunit protein bL28.